We begin with the raw amino-acid sequence, 412 residues long: Heme chaperone HemW (412 aa).

In terms of domain architecture, Radical SAM core spans 4-241 (GTYLMPTAAY…RHGQEVLTQA (238 aa)). Residue tyrosine 13 coordinates S-adenosyl-L-methionine. [2Fe-2S] cluster is bound by residues cysteine 19, cysteine 23, and cysteine 26. S-adenosyl-L-methionine-binding positions include glycine 72, 73-74 (GT), glutamate 105, glutamine 132, arginine 144, and aspartate 169.

It belongs to the anaerobic coproporphyrinogen-III oxidase family. HemW subfamily. [4Fe-4S] cluster is required as a cofactor.

The protein localises to the cytoplasm. Probably acts as a heme chaperone, transferring heme to an unknown acceptor. Binds one molecule of heme per monomer, possibly covalently. Binds 1 [2Fe-2S] cluster. Although this protein has sequence motifs typically found in proteins binding the [4Fe-4S]-AdoMet radical-SAM cluster and S-adenosylmethionine, spectroscopic evidence suggests that a [2Fe-2S] cluster is present; S-adenosylmethionine was not detected. Has no detectable coproporphyrinogen-III oxidase activity. This Synechocystis sp. (strain ATCC 27184 / PCC 6803 / Kazusa) protein is Heme chaperone HemW.